The primary structure comprises 391 residues: Chalcone synthase (391 aa).

Cys164 is an active-site residue.

The protein belongs to the thiolase-like superfamily. Chalcone/stilbene synthases family.

It carries out the reaction (E)-4-coumaroyl-CoA + 3 malonyl-CoA + 3 H(+) = 2',4,4',6'-tetrahydroxychalcone + 3 CO2 + 4 CoA. It functions in the pathway secondary metabolite biosynthesis; flavonoid biosynthesis. In terms of biological role, the primary product of this enzyme is 4,2',4',6'-tetrahydroxychalcone (also termed naringenin-chalcone or chalcone) which can under specific conditions spontaneously isomerize into naringenin. The polypeptide is Chalcone synthase (CHS) (Dianthus monspessulanus).